We begin with the raw amino-acid sequence, 145 residues long: UPF0201 protein STK_09490 (145 aa).

Belongs to the UPF0201 family.

In Sulfurisphaera tokodaii (strain DSM 16993 / JCM 10545 / NBRC 100140 / 7) (Sulfolobus tokodaii), this protein is UPF0201 protein STK_09490.